The sequence spans 60 residues: UPF0434 protein PM0859 (60 aa).

The protein belongs to the UPF0434 family.

This is UPF0434 protein PM0859 from Pasteurella multocida (strain Pm70).